The primary structure comprises 214 residues: Vascular endothelial growth factor A (214 aa).

An N-terminal signal peptide occupies residues 1–26 (MNFLLSWVHWTLALLLYLHHAKWSQA). Intrachain disulfides connect C51/C93, C82/C127, and C86/C129. N100 carries an N-linked (GlcNAc...) asparagine glycan. Residues 131–142 (PKKDRTKPEKKS) show a composition bias toward basic and acidic residues. The tract at residues 131–159 (PKKDRTKPEKKSVRGKGKGQKRKRKKSRF) is disordered. Residues 143-159 (VRGKGKGQKRKRKKSRF) show a composition bias toward basic residues.

The protein belongs to the PDGF/VEGF growth factor family. Homodimer; disulfide-linked. Also found as heterodimer with PGF. Interacts with NRP1. Interacts with isoform 2 of BSG. Interacts with CD82; this interaction inhibits VEGFA-mediated signaling pathway. In terms of tissue distribution, expressed in the pituitary, in brain, in particularly in supraoptic and paraventricular nuclei and the choroid plexus. Also found abundantly in the corpus luteum of the ovary and in kidney glomeruli. Expressed in the ductal epithelial cells of post-pubertal mammary glands. Expressed in the ductal and alveolar epithelial cells throughout the whole period of gestational evolution, lactation and involution.

Its subcellular location is the secreted. Growth factor active in angiogenesis, vasculogenesis and endothelial cell growth. Induces endothelial cell proliferation, promotes cell migration, inhibits apoptosis and induces permeabilization of blood vessels. Binds to the FLT1/VEGFR1 and KDR/VEGFR2 receptors, heparan sulfate and heparin. May play a role in increasing vascular permeability during lactation, when increased transport of molecules from the blood is required for efficient milk protein synthesis. Binding to NRP1 receptor initiates a signaling pathway needed for motor neuron axon guidance and cell body migration, including for the caudal migration of facial motor neurons from rhombomere 4 to rhombomere 6 during embryonic development. Also binds the DEAR/FBXW7-AS1 receptor. This is Vascular endothelial growth factor A (Vegfa) from Rattus norvegicus (Rat).